Consider the following 1078-residue polypeptide: Carbamoyl phosphate synthase large chain (1078 aa).

A carboxyphosphate synthetic domain region spans residues 1–401; it reads MARQPLVSSV…ALQKAVRGLE (401 aa). ATP is bound by residues Arg-129, Arg-169, Gly-175, Gly-176, Arg-208, Leu-210, Glu-215, Gly-241, Val-242, His-243, Gln-284, and Glu-298. The ATP-grasp 1 domain occupies 133–327; it reads KELLLEIGEP…IARIAAKLAI (195 aa). Mg(2+) contacts are provided by Gln-284, Glu-298, and Asn-300. The Mn(2+) site is built by Gln-284, Glu-298, and Asn-300. Residues 402–546 are oligomerization domain; sequence TDQTDLTWED…YATYEDENEA (145 aa). Positions 547–935 are carbamoyl phosphate synthetic domain; it reads PPLDSPKAVV…ALAKAFLAAG (389 aa). The ATP-grasp 2 domain maps to 677–867; it reads ERFLHELGIP…MVDVATQILL (191 aa). 10 residues coordinate ATP: Arg-713, Lys-752, Leu-754, Glu-758, Gly-783, Val-784, His-785, Ser-786, Gln-826, and Glu-838. The Mg(2+) site is built by Gln-826, Glu-838, and Asn-840. 3 residues coordinate Mn(2+): Gln-826, Glu-838, and Asn-840. Residues 936–1078 form the MGS-like domain; that stretch reads LAIERGAPVL…AYRTREAVLA (143 aa). Residues 936 to 1078 form an allosteric domain region; it reads LAIERGAPVL…AYRTREAVLA (143 aa).

This sequence belongs to the CarB family. In terms of assembly, composed of two chains; the small (or glutamine) chain promotes the hydrolysis of glutamine to ammonia, which is used by the large (or ammonia) chain to synthesize carbamoyl phosphate. Tetramer of heterodimers (alpha,beta)4. The cofactor is Mg(2+). Requires Mn(2+) as cofactor.

The catalysed reaction is hydrogencarbonate + L-glutamine + 2 ATP + H2O = carbamoyl phosphate + L-glutamate + 2 ADP + phosphate + 2 H(+). It catalyses the reaction hydrogencarbonate + NH4(+) + 2 ATP = carbamoyl phosphate + 2 ADP + phosphate + 2 H(+). The protein operates within amino-acid biosynthesis; L-arginine biosynthesis; carbamoyl phosphate from bicarbonate: step 1/1. Its pathway is pyrimidine metabolism; UMP biosynthesis via de novo pathway; (S)-dihydroorotate from bicarbonate: step 1/3. Functionally, large subunit of the glutamine-dependent carbamoyl phosphate synthetase (CPSase). CPSase catalyzes the formation of carbamoyl phosphate from the ammonia moiety of glutamine, carbonate, and phosphate donated by ATP, constituting the first step of 2 biosynthetic pathways, one leading to arginine and/or urea and the other to pyrimidine nucleotides. The large subunit (synthetase) binds the substrates ammonia (free or transferred from glutamine from the small subunit), hydrogencarbonate and ATP and carries out an ATP-coupled ligase reaction, activating hydrogencarbonate by forming carboxy phosphate which reacts with ammonia to form carbamoyl phosphate. This Thermomicrobium roseum (strain ATCC 27502 / DSM 5159 / P-2) protein is Carbamoyl phosphate synthase large chain.